We begin with the raw amino-acid sequence, 306 residues long: Protodermal factor 1 (306 aa).

The first 23 residues, 1-23 (MRGMVSFAVWALFAALLSQQLFA), serve as a signal peptide directing secretion. The segment covering 40–56 (PPSGSHGTPPSHTPPSS) has biased composition (low complexity). The tract at residues 40–156 (PPSGSHGTPP…VVTPPSPIVD (117 aa)) is disordered. Residues 62-83 (PYDPSPSTPSHPSPPSHTPTPS) are compositionally biased toward pro residues. Residues 84 to 99 (TPSHTPTPHTPSHTPT) are compositionally biased toward low complexity. A compositionally biased stretch (pro residues) spans 139-154 (SPPPRTPVVVTPPSPI).

Confined to the shoot apical meristem (SAM) at the layer L1 in vegetative, infloresence and floral meristems, as well as in protoderm of organ primordia, including during embryogenesis. Also present in the tip of emerging lateral root primordia.

In terms of biological role, may be involved in the regulation of meristem growth. The protein is Protodermal factor 1 (PDF1) of Arabidopsis thaliana (Mouse-ear cress).